A 1224-amino-acid chain; its full sequence is Protein MSN5 (1224 aa).

Residues 1200 to 1224 (NKENGDMLDDPNIEDGAVGNLFDDN) are disordered.

In terms of assembly, interacts with CEX1.

In Saccharomyces cerevisiae (strain ATCC 204508 / S288c) (Baker's yeast), this protein is Protein MSN5 (MSN5).